The sequence spans 553 residues: Transcription factor GAMYB (553 aa).

Over residues 1–17 the composition is skewed to basic and acidic residues; that stretch reads MYRVKSESDCEMIHQEQ. A disordered region spans residues 1-45; that stretch reads MYRVKSESDCEMIHQEQMDSPVADDGSSGGSPHRGGGPPLKKGPW. Gly residues predominate over residues 27–38; that stretch reads SSGGSPHRGGGP. HTH myb-type domains follow at residues 37 to 89 and 90 to 144; these read GPPL…ANHL and RPNL…KRCQ. DNA-binding regions (H-T-H motif) lie at residues 65–89 and 117–140; these read WNAV…ANHL and WARM…NTRI. Residues 464–488 are disordered; it reads PAQSTSMGSGEQVMGPKYEPGDTSP.

Its subcellular location is the nucleus. Transcriptional activator of gibberellin-dependent alpha-amylase expression in aleurone cells. Involved in pollen and floral organs development. May bind to the 5'-TAACAAA-3' box of alpha-amylase promoter. The sequence is that of Transcription factor GAMYB (GAM1) from Oryza sativa subsp. indica (Rice).